The primary structure comprises 613 residues: MSKIIGIDLGTSNSAAAVVISGKPTVIPSSEGVSIGGKAFPSYVAFTKDGQMLVGEPARRQALLNPEGTIFAAKRKMGTDYKFKVFDKEFTPQQISAFILQKIKKDAEAFLGEPVNEAVITVPAYFNDNQRQATKDAGTIAGFDVKRIINEPTAAALAYGVDKSGKSEKILVFDLGGGTLDVTIIEISKRPNVQVLSTSGDTQLGGTDMDEAIVNYIADDFQKKEGIDLRKDRGAYIRLRDAAEKAKIELSTTLSSDIDLPYITVTSSGPKHIKMTLTRAKLEELISPIVERVKAPIDKALEGAKLKKTDITKLLFVGGPTRIPYVRKYVEDYLGIKAEGGVDPMEAVAIGAAIQGAVLKGEIKDIVLLDVTPLTLSVETLGGIATPIIPANTTIPVRKSQVFTTAEDMQTTVTIHVVQGERPLAKDNVSLGMFNLTGIAPAPRGIPQIEVTFDIDSNGILNVTAVDKATGKKQGITITASTKLSKDEIERMKKEAEQYAEQDRKMKEQIETLNNAESLAYSVEKTLNEAGDKVDKETKDRILSEVKDLRKAIEEKNMDNVKTLMEKISKDIQEVGTKMYQSASSTTQTGSGNQNSSKQENDKTVDAEYKEKS.

Residues 579–613 (MYQSASSTTQTGSGNQNSSKQENDKTVDAEYKEKS) form a disordered region. The segment covering 581 to 597 (QSASSTTQTGSGNQNSS) has biased composition (low complexity). Residues 599–613 (QENDKTVDAEYKEKS) show a composition bias toward basic and acidic residues.

Belongs to the heat shock protein 70 family.

In terms of biological role, acts as a chaperone. The sequence is that of Chaperone protein DnaK from Thermoplasma volcanium (strain ATCC 51530 / DSM 4299 / JCM 9571 / NBRC 15438 / GSS1).